A 316-amino-acid chain; its full sequence is ATP synthase gamma chain (316 aa).

Belongs to the ATPase gamma chain family. F-type ATPases have 2 components, CF(1) - the catalytic core - and CF(0) - the membrane proton channel. CF(1) has five subunits: alpha(3), beta(3), gamma(1), delta(1), epsilon(1). CF(0) has three main subunits: a, b and c.

Its subcellular location is the cellular thylakoid membrane. In terms of biological role, produces ATP from ADP in the presence of a proton gradient across the membrane. The gamma chain is believed to be important in regulating ATPase activity and the flow of protons through the CF(0) complex. This is ATP synthase gamma chain from Prochlorococcus marinus (strain NATL1A).